A 158-amino-acid polypeptide reads, in one-letter code: Lipoprotein signal peptidase (158 aa).

The next 4 membrane-spanning stretches (helical) occupy residues 7-27, 38-58, 67-87, and 95-115; these read LFWI…YWVV, ILPG…FSLF, WLSL…PVLD, and GLIL…GYVV. Residues Asp116 and Asp132 contribute to the active site. The chain crosses the membrane as a helical span at residues 125–145; the sequence is FAVFNMADSFISIGIVCLLLA.

The protein belongs to the peptidase A8 family.

Its subcellular location is the cell inner membrane. It catalyses the reaction Release of signal peptides from bacterial membrane prolipoproteins. Hydrolyzes -Xaa-Yaa-Zaa-|-(S,diacylglyceryl)Cys-, in which Xaa is hydrophobic (preferably Leu), and Yaa (Ala or Ser) and Zaa (Gly or Ala) have small, neutral side chains.. It participates in protein modification; lipoprotein biosynthesis (signal peptide cleavage). In terms of biological role, this protein specifically catalyzes the removal of signal peptides from prolipoproteins. In Nostoc sp. (strain PCC 7120 / SAG 25.82 / UTEX 2576), this protein is Lipoprotein signal peptidase.